We begin with the raw amino-acid sequence, 33 residues long: Cytochrome b6-f complex subunit 8 (33 aa).

Residues 2-22 (LFTLGWASLAAMFSFSIAMVV) form a helical membrane-spanning segment.

Belongs to the PetN family. In terms of assembly, the 4 large subunits of the cytochrome b6-f complex are cytochrome b6, subunit IV (17 kDa polypeptide, PetD), cytochrome f and the Rieske protein, while the 4 small subunits are PetG, PetL, PetM and PetN. The complex functions as a dimer.

Its subcellular location is the cellular thylakoid membrane. Component of the cytochrome b6-f complex, which mediates electron transfer between photosystem II (PSII) and photosystem I (PSI), cyclic electron flow around PSI, and state transitions. The sequence is that of Cytochrome b6-f complex subunit 8 from Synechococcus sp. (strain CC9605).